Reading from the N-terminus, the 95-residue chain is Large ribosomal subunit protein uL23 (95 aa).

The protein belongs to the universal ribosomal protein uL23 family. In terms of assembly, part of the 50S ribosomal subunit. Contacts protein L29, and trigger factor when it is bound to the ribosome.

Functionally, one of the early assembly proteins it binds 23S rRNA. One of the proteins that surrounds the polypeptide exit tunnel on the outside of the ribosome. Forms the main docking site for trigger factor binding to the ribosome. This chain is Large ribosomal subunit protein uL23, found in Heliobacterium modesticaldum (strain ATCC 51547 / Ice1).